A 179-amino-acid chain; its full sequence is Protein GrpE (179 aa).

The segment at 1-29 (MQDQDKYAEQAASIEDPVTAEAASATTPT) is disordered.

This sequence belongs to the GrpE family. As to quaternary structure, homodimer.

It localises to the cytoplasm. In terms of biological role, participates actively in the response to hyperosmotic and heat shock by preventing the aggregation of stress-denatured proteins, in association with DnaK and GrpE. It is the nucleotide exchange factor for DnaK and may function as a thermosensor. Unfolded proteins bind initially to DnaJ; upon interaction with the DnaJ-bound protein, DnaK hydrolyzes its bound ATP, resulting in the formation of a stable complex. GrpE releases ADP from DnaK; ATP binding to DnaK triggers the release of the substrate protein, thus completing the reaction cycle. Several rounds of ATP-dependent interactions between DnaJ, DnaK and GrpE are required for fully efficient folding. The protein is Protein GrpE of Janthinobacterium sp. (strain Marseille) (Minibacterium massiliensis).